Reading from the N-terminus, the 471-residue chain is Metalloprotease TIKI homolog (471 aa).

The signal sequence occupies residues 1–24; that stretch reads MAAFTLWILVLNVFLLGFQARKLA. The Extracellular segment spans residues 25 to 449; the sequence is SNLKFPIQKC…SRKAAASCTP (425 aa). Asparagine 226, asparagine 235, asparagine 284, and asparagine 342 each carry an N-linked (GlcNAc...) asparagine glycan. The segment covering 369–402 has biased composition (basic residues); sequence KAKKSLNTRRERRKGCRGRRKKSKRCQKKKKRKR. Positions 369–406 are disordered; sequence KAKKSLNTRRERRKGCRGRRKKSKRCQKKKKRKRPDYS. Residues 450 to 470 form a helical membrane-spanning segment; sequence IWTVSLALTCAVTCLLTYSGF. Position 471 (arginine 471) is a topological domain, cytoplasmic.

Belongs to the TIKI family. Requires Mn(2+) as cofactor. It depends on Co(2+) as a cofactor.

Its subcellular location is the membrane. Functionally, metalloprotease. In Nematostella vectensis (Starlet sea anemone), this protein is Metalloprotease TIKI homolog.